The primary structure comprises 221 residues: Large ribosomal subunit protein uL3 (221 aa).

A disordered region spans residues 131 to 165 (HNQSRGPETHGSRHHRRPGSMGPIKGKIKGKKLPG).

This sequence belongs to the universal ribosomal protein uL3 family. As to quaternary structure, part of the 50S ribosomal subunit. Forms a cluster with proteins L14 and L19.

Its function is as follows. One of the primary rRNA binding proteins, it binds directly near the 3'-end of the 23S rRNA, where it nucleates assembly of the 50S subunit. This chain is Large ribosomal subunit protein uL3, found in Phytoplasma australiense.